A 154-amino-acid polypeptide reads, in one-letter code: Jupiter microtubule associated homolog 1 (154 aa).

Residue Met1 is modified to N-acetylmethionine. Residues 1–19 (MTTTTTFKGVDPNSRNSSR) show a composition bias toward polar residues. The disordered stretch occupies residues 1–154 (MTTTTTFKGV…PGGKSSLVLG (154 aa)). Thr2 carries the N-acetylthreonine; in Hematological and neurological expressed 1 protein, N-terminally processed modification. A phosphoserine mark is found at Ser28 and Ser31. A compositionally biased stretch (polar residues) spans 47–59 (MASNIFGTPEENQ). Thr54 carries the post-translational modification Phosphothreonine. Over residues 60–71 (ASWAKSAGAKSS) the composition is skewed to low complexity. Ser71, Ser80, Ser87, Ser88, and Ser92 each carry phosphoserine. The segment covering 80 to 91 (SGLQRRNSSEAS) has biased composition (polar residues). Basic and acidic residues predominate over residues 96–108 (LDLKGEGDIHENV). Residues 125–138 (PAAPVPSPVAPAPV) are compositionally biased toward pro residues. A Phosphoserine modification is found at Ser131. Residue Lys148 is modified to N6-acetyllysine.

It belongs to the JUPITER family. Interacts with the complex composed, at least, of APC, CTNNB1 and GSK3B; the interaction takes place with the inactive form of GSK3B (phosphorylated at 'Ser-9'). As to expression, expressed in testis, skeletal muscle, thymus, prostate, colon, peripheral blood cells, brain and placenta.

The protein resides in the nucleus. It localises to the cytoplasm. Modulates negatively AKT-mediated GSK3B signaling. Induces CTNNB1 'Ser-33' phosphorylation and degradation through the suppression of the inhibitory 'Ser-9' phosphorylation of GSK3B, which represses the function of the APC:CTNNB1:GSK3B complex and the interaction with CDH1/E-cadherin in adherent junctions. Plays a role in the regulation of cell cycle and cell adhesion. Has an inhibitory role on AR-signaling pathway through the induction of receptor proteasomal degradation. This is Jupiter microtubule associated homolog 1 from Homo sapiens (Human).